Consider the following 201-residue polypeptide: Recombination protein RecR (201 aa).

Residues 57–72 (CADCRTFTEQEVCNIC) form a C4-type zinc finger. In terms of domain architecture, Toprim spans 81-176 (GQICVVESPA…EASRIAHGVP (96 aa)).

Belongs to the RecR family.

In terms of biological role, may play a role in DNA repair. It seems to be involved in an RecBC-independent recombinational process of DNA repair. It may act with RecF and RecO. In Salmonella arizonae (strain ATCC BAA-731 / CDC346-86 / RSK2980), this protein is Recombination protein RecR.